The following is a 386-amino-acid chain: Succinate--CoA ligase [ADP-forming] subunit beta (386 aa).

Residues 9-235 form the ATP-grasp domain; sequence KELFAKHDVP…REEEDPLESA (227 aa). ATP-binding positions include Lys44, 51–53, Ala93, and Glu98; that span reads GRG. Residues Asn190 and Asp204 each coordinate Mg(2+). Substrate contacts are provided by residues Asn255 and 317–319; that span reads GIT.

This sequence belongs to the succinate/malate CoA ligase beta subunit family. Heterotetramer of two alpha and two beta subunits. It depends on Mg(2+) as a cofactor.

The catalysed reaction is succinate + ATP + CoA = succinyl-CoA + ADP + phosphate. The enzyme catalyses GTP + succinate + CoA = succinyl-CoA + GDP + phosphate. It participates in carbohydrate metabolism; tricarboxylic acid cycle; succinate from succinyl-CoA (ligase route): step 1/1. In terms of biological role, succinyl-CoA synthetase functions in the citric acid cycle (TCA), coupling the hydrolysis of succinyl-CoA to the synthesis of either ATP or GTP and thus represents the only step of substrate-level phosphorylation in the TCA. The beta subunit provides nucleotide specificity of the enzyme and binds the substrate succinate, while the binding sites for coenzyme A and phosphate are found in the alpha subunit. The protein is Succinate--CoA ligase [ADP-forming] subunit beta of Nocardioides sp. (strain ATCC BAA-499 / JS614).